We begin with the raw amino-acid sequence, 390 residues long: Phosphoglycerate kinase (390 aa).

Substrate-binding positions include 21–23, arginine 36, 59–62, arginine 114, and arginine 147; these read DLN and HLGR. Residues lysine 198, glutamate 314, and 340–343 contribute to the ATP site; that span reads GGDT.

This sequence belongs to the phosphoglycerate kinase family. As to quaternary structure, monomer.

Its subcellular location is the cytoplasm. The enzyme catalyses (2R)-3-phosphoglycerate + ATP = (2R)-3-phospho-glyceroyl phosphate + ADP. It functions in the pathway carbohydrate degradation; glycolysis; pyruvate from D-glyceraldehyde 3-phosphate: step 2/5. In Buchnera aphidicola subsp. Acyrthosiphon pisum (strain 5A), this protein is Phosphoglycerate kinase.